The sequence spans 441 residues: Ribosomal protein uS12 methylthiotransferase RimO (441 aa).

The MTTase N-terminal domain occupies 7–117 (PKVSFVSLGC…VLDAVHRALP (111 aa)). Residues Cys16, Cys52, Cys81, Cys148, Cys152, and Cys155 each coordinate [4Fe-4S] cluster. The region spanning 134–371 (LTPRHYAYLK…MARQQKISAR (238 aa)) is the Radical SAM core domain. The 67-residue stretch at 374–440 (KRKVGTRQQV…AYDLHGSVAG (67 aa)) folds into the TRAM domain.

This sequence belongs to the methylthiotransferase family. RimO subfamily. The cofactor is [4Fe-4S] cluster.

It is found in the cytoplasm. It catalyses the reaction L-aspartate(89)-[ribosomal protein uS12]-hydrogen + (sulfur carrier)-SH + AH2 + 2 S-adenosyl-L-methionine = 3-methylsulfanyl-L-aspartate(89)-[ribosomal protein uS12]-hydrogen + (sulfur carrier)-H + 5'-deoxyadenosine + L-methionine + A + S-adenosyl-L-homocysteine + 2 H(+). Catalyzes the methylthiolation of an aspartic acid residue of ribosomal protein uS12. The chain is Ribosomal protein uS12 methylthiotransferase RimO from Rhodopseudomonas palustris (strain BisB18).